The chain runs to 59 residues: UPF0434 protein Mmc1_0910 (59 aa).

It belongs to the UPF0434 family.

The chain is UPF0434 protein Mmc1_0910 from Magnetococcus marinus (strain ATCC BAA-1437 / JCM 17883 / MC-1).